Consider the following 94-residue polypeptide: Small ribosomal subunit protein uS19 (94 aa).

This sequence belongs to the universal ribosomal protein uS19 family.

Protein S19 forms a complex with S13 that binds strongly to the 16S ribosomal RNA. This Elusimicrobium minutum (strain Pei191) protein is Small ribosomal subunit protein uS19.